The sequence spans 431 residues: Glutamate-1-semialdehyde 2,1-aminomutase (431 aa).

N6-(pyridoxal phosphate)lysine is present on lysine 269.

The protein belongs to the class-III pyridoxal-phosphate-dependent aminotransferase family. HemL subfamily. Homodimer. It depends on pyridoxal 5'-phosphate as a cofactor.

The protein localises to the cytoplasm. It carries out the reaction (S)-4-amino-5-oxopentanoate = 5-aminolevulinate. It functions in the pathway porphyrin-containing compound metabolism; protoporphyrin-IX biosynthesis; 5-aminolevulinate from L-glutamyl-tRNA(Glu): step 2/2. The protein operates within porphyrin-containing compound metabolism; chlorophyll biosynthesis. The polypeptide is Glutamate-1-semialdehyde 2,1-aminomutase (Pelodictyon phaeoclathratiforme (strain DSM 5477 / BU-1)).